A 333-amino-acid chain; its full sequence is Small ribosomal subunit protein uS2 (333 aa).

This sequence belongs to the universal ribosomal protein uS2 family.

The polypeptide is Small ribosomal subunit protein uS2 (Azorhizobium caulinodans (strain ATCC 43989 / DSM 5975 / JCM 20966 / LMG 6465 / NBRC 14845 / NCIMB 13405 / ORS 571)).